Here is a 473-residue protein sequence, read N- to C-terminus: MTEAKNISDDTDVLSLTTNSLRTSKTLFGAEFGSVTSFDDTVAQNLKRTYKEHLEYGSVLGGTVGKRKNRHYEEDTIGSNALTVRADSENPSSQVITKFSDPNKKIAGQVSMQSLEKIKGVPEAAHRIAGESQASLVKRTLAEQIRPEWHAPWTLMRVISGHLGWVRCVDVEPGNQWFCTGAGDRTIKIWDLASGVLKLTLTGHIATVRGLAVSPRHPYLFSCGEDKMVKCWDLETNKVIRHYHGHLSGVYALKLHPTLDVLVTAGRDAVARVWDMRTRQNVHVLSGHKSTVASLAVQEFDPQVVTGSMDSTIRLWDLAAGKTLTTLTHHKKTVRALSLHPDEFTFASGSSDNIKHWKFPEGAFMGNFEGHNAIVNTLSINSDNVMFSGADNGSMCFWDWKSGHKYQELQSVVQPGSLDSEAGIFASSFDKTGLRLITCEADKSVKIYKQVDNATPETHPNLPWTPSNLRRRY.

WD repeat units follow at residues 161–191 (GHLG…KIWD), 203–233 (GHIA…KCWD), 245–275 (GHLS…RVWD), 287–317 (GHKS…RLWD), 329–358 (HHKK…KHWK), 370–399 (GHNA…CFWD), and 419–449 (DSEA…KIYK).

This sequence belongs to the WD repeat PRL1/PRL2 family. In terms of assembly, belongs to the 40S cdc5-associated complex (or cwf complex), a spliceosome sub-complex reminiscent of a late-stage spliceosome composed of the U2, U5 and U6 snRNAs and at least brr2, cdc5, cwf2/prp3, cwf3/syf1, cwf4/syf3, cwf5/ecm2, spp42/cwf6, cwf7/spf27, cwf8, cwf9, cwf10, cwf11, cwf12, prp45/cwf13, cwf14, cwf15, cwf16, cwf17, cwf18, cwf19, cwf20, cwf21, cwf22, cwf23, cwf24, cwf25, cwf26, cyp7/cwf27, cwf28, cwf29/ist3, lea1, msl1, prp5/cwf1, prp10, prp12/sap130, prp17, prp22, sap61, sap62, sap114, sap145, slu7, smb1, smd1, smd3, smf1, smg1 and syf2.

It is found in the nucleus. Functionally, required for both cell cycle progression at G2/M and pre-mRNA splicing. Interacts genetically with the PRP4 kinase. This chain is Pre-mRNA-splicing factor prp5 (prp5), found in Schizosaccharomyces pombe (strain 972 / ATCC 24843) (Fission yeast).